A 352-amino-acid polypeptide reads, in one-letter code: Ion-translocating oxidoreductase complex subunit D (352 aa).

Transmembrane regions (helical) follow at residues 20 to 40, 42 to 62, 78 to 109, 123 to 143, and 148 to 168; these read IMLL…WFFG, GTLV…ALVL, ALLT…VIIA, PAMI…TSWL, and IAVN…GHTA. Position 187 is an FMN phosphoryl threonine (Thr-187). 5 helical membrane passes run 214–234, 242–262, 267–287, 301–321, and 322–342; these read ILAG…GVWL, WHIP…GWLF, LAAP…FFIL, LIFG…GGYP, and DGVA…DYYT.

This sequence belongs to the NqrB/RnfD family. As to quaternary structure, the complex is composed of six subunits: RsxA, RsxB, RsxC, RsxD, RsxE and RsxG. The cofactor is FMN.

The protein localises to the cell inner membrane. Part of a membrane-bound complex that couples electron transfer with translocation of ions across the membrane. Required to maintain the reduced state of SoxR. This Escherichia coli O157:H7 protein is Ion-translocating oxidoreductase complex subunit D.